A 430-amino-acid chain; its full sequence is Adenylosuccinate synthetase (430 aa).

Residues 12-18 (GDEGKGK) and 40-42 (GHT) contribute to the GTP site. Asp-13 serves as the catalytic Proton acceptor. Positions 13 and 40 each coordinate Mg(2+). IMP is bound by residues 13-16 (DEGK), 38-41 (NAGH), Thr-130, Arg-144, Gln-225, Thr-240, and Arg-304. Catalysis depends on His-41, which acts as the Proton donor. 300–306 (ATTGRPR) is a substrate binding site. GTP-binding positions include Arg-306, 332-334 (KLD), and 414-416 (SIG).

It belongs to the adenylosuccinate synthetase family. As to quaternary structure, homodimer. Requires Mg(2+) as cofactor.

The protein localises to the cytoplasm. It catalyses the reaction IMP + L-aspartate + GTP = N(6)-(1,2-dicarboxyethyl)-AMP + GDP + phosphate + 2 H(+). The protein operates within purine metabolism; AMP biosynthesis via de novo pathway; AMP from IMP: step 1/2. Plays an important role in the de novo pathway of purine nucleotide biosynthesis. Catalyzes the first committed step in the biosynthesis of AMP from IMP. This chain is Adenylosuccinate synthetase, found in Geobacter metallireducens (strain ATCC 53774 / DSM 7210 / GS-15).